A 471-amino-acid polypeptide reads, in one-letter code: Rho GTPase-activating protein 15 (471 aa).

The disordered stretch occupies residues 1 to 20 (MQKSTNSDIPVETLNPTRQG). Ser43 is subject to Phosphoserine. Positions 79-189 (MVEKEGYLQK…WFHAIKNAID (111 aa)) constitute a PH domain. A phosphoserine mark is found at Ser196, Ser199, and Ser243. In terms of domain architecture, Rho-GAP spans 281-470 (SHLHTLCERE…LMLSAYDQIF (190 aa)).

Its subcellular location is the cytoplasm. The protein resides in the membrane. In terms of biological role, GTPase activator for the Rho-type GTPases by converting them to an inactive GDP-bound state. Has activity toward RAC1. Overexpression results in an increase in actin stress fibers and cell contraction. This chain is Rho GTPase-activating protein 15 (ARHGAP15), found in Bos taurus (Bovine).